The sequence spans 138 residues: uncharacterized protein (138 aa).

3 helical membrane passes run 17 to 37, 43 to 63, and 117 to 137; these read LIVSTIYIVLFFAILNLTVFF, INLILKNSCVVSFVVVWLLVC, and FWWMNFSLYLLGSLISIVVSL.

It is found in the cell membrane. This is an uncharacterized protein from Mycoplasma pneumoniae (strain ATCC 29342 / M129 / Subtype 1) (Mycoplasmoides pneumoniae).